The primary structure comprises 239 residues: Large ribosomal subunit protein mL67 (239 aa).

Belongs to the mitochondrion-specific ribosomal protein mL67 family. Component of the mitochondrial large ribosomal subunit (mt-LSU).

It is found in the nucleus. The protein localises to the mitochondrion. Its function is as follows. Component of the mitochondrial ribosome (mitoribosome), a dedicated translation machinery responsible for the synthesis of mitochondrial genome-encoded proteins, including at least some of the essential transmembrane subunits of the mitochondrial respiratory chain. The mitoribosomes are attached to the mitochondrial inner membrane and translation products are cotranslationally integrated into the membrane. mL67/MHR1 also has extraribosomal functions, being involved in regulation of mitochondrial DNA recombination, maintenance and repair, and generation of homoplasmic cells. mL67/MHR1 also acts as transcription factor involved in regulation of RNA polymerase II-dependent transcription. The polypeptide is Large ribosomal subunit protein mL67 (MHR1) (Candida albicans (strain SC5314 / ATCC MYA-2876) (Yeast)).